Here is a 355-residue protein sequence, read N- to C-terminus: VDAAVLEKLQAGFKKLEAATDCKSLLKKYLSKDIFDKLKGQKTSLGATLLDVIQSGVENLDSGVGIYAPDAEAYTLFAPLFDPIIEDYHVGFKQTDKHPNKDFGDVSSFVNVDPEGQYVISTRVRCGRSMEGYPFNPCLTEAQYKEMQQKVSSTLSSLEGELKGTYFPLTGMSKEVQQKLIDDHFLFKEGDRFLQAANACRYWPAGRGIYHNDNKTFLVWVNEEDHLRIISMQMGGDLGQVFRRLTSAVNEIEKRIPFSHHDRLGFLTFCPTNLGTTVRASVHIKLPKLAANRDKLEEVAGKYNLQVRGTRGEHTEAEGGIYDISNKRRMGLTEFQAVKEMQDGILQLIKMEKEM.

Positions 8-90 (KLQAGFKKLE…FDPIIEDYHV (83 aa)) constitute a Phosphagen kinase N-terminal domain. 63–67 (GVGIY) contributes to the L-arginine binding site. In terms of domain architecture, Phosphagen kinase C-terminal spans 118 to 355 (YVISTRVRCG…LQLIKMEKEM (238 aa)). Residues 121–125 (STRVR) and histidine 184 contribute to the ATP site. Glutamate 224 is a binding site for L-arginine. An ATP-binding site is contributed by arginine 228. Cysteine 270 contacts L-arginine. ATP-binding positions include 279–283 (RASVH) and 308–313 (RGTRGE). Residue glutamate 313 participates in L-arginine binding.

Belongs to the ATP:guanido phosphotransferase family. In terms of assembly, monomer.

The enzyme catalyses L-arginine + ATP = N(omega)-phospho-L-arginine + ADP + H(+). The sequence is that of Arginine kinase from Penaeus japonicus (Kuruma prawn).